Here is a 95-residue protein sequence, read N- to C-terminus: Co-chaperonin GroES (95 aa).

It belongs to the GroES chaperonin family. As to quaternary structure, heptamer of 7 subunits arranged in a ring. Interacts with the chaperonin GroEL.

The protein localises to the cytoplasm. Together with the chaperonin GroEL, plays an essential role in assisting protein folding. The GroEL-GroES system forms a nano-cage that allows encapsulation of the non-native substrate proteins and provides a physical environment optimized to promote and accelerate protein folding. GroES binds to the apical surface of the GroEL ring, thereby capping the opening of the GroEL channel. This chain is Co-chaperonin GroES, found in Marinobacter nauticus (strain ATCC 700491 / DSM 11845 / VT8) (Marinobacter aquaeolei).